We begin with the raw amino-acid sequence, 378 residues long: Zinc transporter 7 (378 aa).

Over 1 to 37 (MLPLSIKDDEYKPPRLNLFRKMSGWFRSILADKTSRN) the chain is Cytoplasmic. Residues 38 to 58 (LFFFLCLNLSFAFVELLYGVW) form a helical membrane-spanning segment. The Lumenal portion of the chain corresponds to 59-67 (SNSLGLISD). A helical transmembrane segment spans residues 68 to 88 (SFHMFFDCTALLAGLAASVIS). Topologically, residues 89–102 (KWRSNDAFSYGYVR) are cytoplasmic. A helical membrane pass occupies residues 103–123 (AEVLAGFVNGLFLIFTAFFIF). Residues 124–140 (SEGVERALEPPDVHHER) are Lumenal-facing. The helical transmembrane segment at 141–161 (LLPVSILGFIVNLIGIFVFQH) threads the bilayer. The his-rich loop stretch occupies residues 161–223 (HGGHGHSHGS…HGQDYCHDDH (63 aa)). At 162–238 (GGHGHSHGSG…TGSSKQILQG (77 aa)) the chain is on the cytoplasmic side. The tract at residues 185–214 (HGHSHRGHGHSHEHKHGHTHDHGHSHGLSH) is disordered. The span at 186-211 (GHSHRGHGHSHEHKHGHTHDHGHSHG) shows a compositional bias: basic residues. A helical membrane pass occupies residues 239–259 (VFLHIVADTLGSIGVIISAIL). Over 260-264 (MQNYG) the chain is Lumenal. Residues 265 to 285 (LMIADPICSMLIALLIGVSIV) traverse the membrane as a helical segment. At 286–378 (PLLKESIGIL…LYIQIDVAAM (93 aa)) the chain is on the cytoplasmic side.

This sequence belongs to the cation diffusion facilitator (CDF) transporter (TC 2.A.4) family. SLC30A subfamily. Homooligomer.

The protein resides in the golgi apparatus membrane. It localises to the cytoplasmic vesicle. Its subcellular location is the golgi apparatus. It is found in the trans-Golgi network. The protein localises to the sarcoplasmic reticulum. The protein resides in the mitochondrion. It carries out the reaction Zn(2+)(in) = Zn(2+)(out). Zinc ion transporter mediating zinc entry from the cytosol into the lumen of organelles along the secretory pathway. By contributing to zinc ion homeostasis within the early secretory pathway, regulates the activation and folding of enzymes like alkaline phosphatases. The protein is Zinc transporter 7 (SLC30A7) of Gallus gallus (Chicken).